The chain runs to 355 residues: Guanine nucleotide-binding protein G(z) subunit alpha (355 aa).

The span at 1–14 (MGCRQSSEEKEAAR) shows a compositional bias: basic and acidic residues. Residues 1–26 (MGCRQSSEEKEAARRSRRIDRHLRSE) form a disordered region. G2 carries N-myristoyl glycine lipidation. The S-palmitoyl cysteine moiety is linked to residue C3. The G-alpha domain occupies 32–355 (REIKLLLLGT…QNNLKYIGLC (324 aa)). A G1 motif region spans residues 35-48 (KLLLLGTSNSGKST). Residues 40-47 (GTSNSGKS), 176-182 (LRSRDMT), 201-205 (DVGGQ), 270-273 (NKKD), and A327 contribute to the GTP site. Residue S47 participates in Mg(2+) binding. The interval 174–182 (DILRSRDMT) is G2 motif. An ADP-ribosylarginine; by cholera toxin modification is found at R179. T182 contributes to the Mg(2+) binding site. The segment at 197–206 (FKMVDVGGQR) is G3 motif. The tract at residues 266 to 273 (ILFLNKKD) is G4 motif. The segment at 325–330 (TCATDT) is G5 motif.

It belongs to the G-alpha family. G(i/o/t/z) subfamily. In terms of assembly, G-proteins are composed of 3 units; alpha, beta and gamma. The alpha chain contains the guanine nucleotide binding site. Interacts with ADGRB2.

The protein localises to the membrane. Functionally, guanine nucleotide-binding proteins (G proteins) are involved as modulators or transducers in various transmembrane signaling systems. This is Guanine nucleotide-binding protein G(z) subunit alpha (GNAZ) from Homo sapiens (Human).